The sequence spans 259 residues: Large ribosomal subunit protein eL8 (259 aa).

The interval 1–24 (MAPKSKKVAPSPFAQPKAAKTTKN) is disordered. Residues serine 11 and serine 33 each carry the phosphoserine modification.

It belongs to the eukaryotic ribosomal protein eL8 family. In terms of assembly, component of the large ribosomal subunit (LSU). Mature yeast ribosomes consist of a small (40S) and a large (60S) subunit. The 40S small subunit contains 1 molecule of ribosomal RNA (18S rRNA) and at least 33 different proteins. The large 60S subunit contains 3 rRNA molecules (25S, 5.8S and 5S rRNA) and at least 46 different proteins.

It localises to the cytoplasm. Functionally, component of the ribosome, a large ribonucleoprotein complex responsible for the synthesis of proteins in the cell. The small ribosomal subunit (SSU) binds messenger RNAs (mRNAs) and translates the encoded message by selecting cognate aminoacyl-transfer RNA (tRNA) molecules. The large subunit (LSU) contains the ribosomal catalytic site termed the peptidyl transferase center (PTC), which catalyzes the formation of peptide bonds, thereby polymerizing the amino acids delivered by tRNAs into a polypeptide chain. The nascent polypeptides leave the ribosome through a tunnel in the LSU and interact with protein factors that function in enzymatic processing, targeting, and the membrane insertion of nascent chains at the exit of the ribosomal tunnel. This is Large ribosomal subunit protein eL8 (rpl8) from Schizosaccharomyces pombe (strain 972 / ATCC 24843) (Fission yeast).